We begin with the raw amino-acid sequence, 348 residues long: S-adenosylmethionine:tRNA ribosyltransferase-isomerase (348 aa).

This sequence belongs to the QueA family. Monomer.

The protein localises to the cytoplasm. It carries out the reaction 7-aminomethyl-7-carbaguanosine(34) in tRNA + S-adenosyl-L-methionine = epoxyqueuosine(34) in tRNA + adenine + L-methionine + 2 H(+). Its pathway is tRNA modification; tRNA-queuosine biosynthesis. Its function is as follows. Transfers and isomerizes the ribose moiety from AdoMet to the 7-aminomethyl group of 7-deazaguanine (preQ1-tRNA) to give epoxyqueuosine (oQ-tRNA). This chain is S-adenosylmethionine:tRNA ribosyltransferase-isomerase, found in Alteromonas mediterranea (strain DSM 17117 / CIP 110805 / LMG 28347 / Deep ecotype).